A 168-amino-acid chain; its full sequence is Peptide deformylase 2 (168 aa).

Fe cation is bound by residues C91 and H133. The active site involves E134. Position 137 (H137) interacts with Fe cation.

This sequence belongs to the polypeptide deformylase family. Fe(2+) is required as a cofactor.

The enzyme catalyses N-terminal N-formyl-L-methionyl-[peptide] + H2O = N-terminal L-methionyl-[peptide] + formate. Removes the formyl group from the N-terminal Met of newly synthesized proteins. Requires at least a dipeptide for an efficient rate of reaction. N-terminal L-methionine is a prerequisite for activity but the enzyme has broad specificity at other positions. The sequence is that of Peptide deformylase 2 from Vibrio parahaemolyticus serotype O3:K6 (strain RIMD 2210633).